A 501-amino-acid chain; its full sequence is Glycogen synthase 1 (501 aa).

Lysine 18 contributes to the ADP-alpha-D-glucose binding site.

Belongs to the glycosyltransferase 1 family. Bacterial/plant glycogen synthase subfamily.

It carries out the reaction [(1-&gt;4)-alpha-D-glucosyl](n) + ADP-alpha-D-glucose = [(1-&gt;4)-alpha-D-glucosyl](n+1) + ADP + H(+). It participates in glycan biosynthesis; glycogen biosynthesis. Its function is as follows. Synthesizes alpha-1,4-glucan chains using ADP-glucose. The chain is Glycogen synthase 1 from Geobacter sulfurreducens (strain ATCC 51573 / DSM 12127 / PCA).